Reading from the N-terminus, the 1938-residue chain is Autophagy-related protein 2 homolog A (1938 aa).

One can recognise a Chorein N-terminal domain in the interval 14–111 (ERVCRYLLHH…QLTLQPRRGP (98 aa)). Phosphoserine occurs at positions 765, 878, 892, 894, 1266, 1301, and 1309. Positions 1242–1272 (DLHPPPRPPSPTEIAGQKLSESPASLPSCPP) are disordered. A disordered region spans residues 1315-1359 (LFPGERSGAPPPSPPVGGPAGSLGSCSEEKEDEREEEGDGDTLDS). Residues 1343 to 1359 (EKEDEREEEGDGDTLDS) are compositionally biased toward acidic residues. Positions 1358-1404 (DSDEFCILDAPGLGIPPRDGEPVVTQLHPGPIVVRDGYFSRPIGSTD) are WIPI-interacting. At Ser1402 the chain carries Phosphoserine. Disordered regions lie at residues 1438–1476 (PHPG…GSGR) and 1614–1657 (GETS…PSPP). The span at 1446-1464 (TGLSGPRSSPSRCSGPNRP) shows a compositional bias: low complexity.

It belongs to the ATG2 family. As to quaternary structure, interacts with ATG9A (via C-terminus). Interacts (via WIPI-interacting region) with WDR45B/WIPI3. Interacts (via WIPI-interacting region) with WDR45/WIPI4. Interacts with TMEM41B. Interacts with VMP1.

The protein localises to the preautophagosomal structure membrane. The protein resides in the lipid droplet. It localises to the endoplasmic reticulum membrane. The enzyme catalyses a 1,2-diacyl-sn-glycero-3-phospho-L-serine(in) = a 1,2-diacyl-sn-glycero-3-phospho-L-serine(out). It carries out the reaction a 1,2-diacyl-sn-glycero-3-phosphoethanolamine(in) = a 1,2-diacyl-sn-glycero-3-phosphoethanolamine(out). Its function is as follows. Lipid transfer protein involved in autophagosome assembly. Tethers the edge of the isolation membrane (IM) to the endoplasmic reticulum (ER) and mediates direct lipid transfer from ER to IM for IM expansion. Binds to the ER exit site (ERES), which is the membrane source for autophagosome formation, and extracts phospholipids from the membrane source and transfers them to ATG9 (ATG9A or ATG9B) to the IM for membrane expansion. Lipid transfer activity is enhanced by WIPI1 and WDR45/WIPI4, which promote ATG2A-association with phosphatidylinositol 3-monophosphate (PI3P)-containing membranes. Also regulates lipid droplets morphology and distribution within the cell. The protein is Autophagy-related protein 2 homolog A of Homo sapiens (Human).